A 724-amino-acid polypeptide reads, in one-letter code: Probable ATP-dependent RNA helicase DDX4 (724 aa).

The segment at 1–246 (MGDEDWEAEI…SDTQGPKVTY (246 aa)) is disordered. Positions 30–42 (NGDNFNRTPASSS) are enriched in polar residues. Over residues 69–78 (DAGECNKRDN) the composition is skewed to basic and acidic residues. Positions 150–162 (RGSFRGCRGGFGL) are enriched in gly residues. Low complexity predominate over residues 195–205 (GDTSQSRSGSG). Residues Ser-222 and Ser-226 each carry the phosphoserine modification. The segment at 228-247 (KSEAEGGESSDTQGPKVTYI) is interaction with RANBP9. Positions 288 to 316 (LTFEEANLCQTLNNNIAKAGYTKLTPVQK) match the Q motif motif. One can recognise a Helicase ATP-binding domain in the interval 319-502 (IPIILAGRDL…AEFLKSNYLF (184 aa)). Position 332–339 (332–339 (AQTGSGKT)) interacts with ATP. A DEAD box motif is present at residues 446-449 (DEAD). The 146-residue stretch at 530 to 675 (KLVEILRNIG…DVPAWLEEIA (146 aa)) folds into the Helicase C-terminal domain. The segment covering 704–715 (LNTAGFSSSQAP) has biased composition (polar residues). The interval 704–724 (LNTAGFSSSQAPNPVDDESWD) is disordered. Ser-722 is subject to Phosphoserine.

Belongs to the DEAD box helicase family. DDX4/VASA subfamily. Found in a mRNP complex, at least composed of TDRD1, TDRD6, TDRD7 and DDX4. Interacts with RANBP9. Interacts with RANBP10. Interacts with PIWIL2 and MAEL. Interacts with BMAL1 and CLOCK. Interacts with Tex19.1 and, probably, Tex19.2. Interacts with RBM46. Expressed only in ovary and testis. Expressed in migratory primordial germ cells in the region of the gonadal ridge in both sexes.

It localises to the cytoplasm. Its subcellular location is the perinuclear region. It catalyses the reaction ATP + H2O = ADP + phosphate + H(+). Functionally, ATP-dependent RNA helicase required during spermatogenesis. Required to repress transposable elements and preventing their mobilization, which is essential for the germline integrity. Acts via the piRNA metabolic process, which mediates the repression of transposable elements during meiosis by forming complexes composed of piRNAs and Piwi proteins and governs the methylation and subsequent repression of transposons. Involved in the secondary piRNAs metabolic process, the production of piRNAs in fetal male germ cells through a ping-pong amplification cycle. Required for PIWIL2 slicing-triggered piRNA biogenesis: helicase activity enables utilization of one of the slice cleavage fragments generated by PIWIL2 and processing these pre-piRNAs into piRNAs. The protein is Probable ATP-dependent RNA helicase DDX4 (DDX4) of Homo sapiens (Human).